The following is a 178-amino-acid chain: MDVAFDLVNYAYASRLRLLKEMRERDARRKLSKKEAQHHMAIVAAQNASRELEIAQQQRAGKEAQLYQELTSLNTLSSAALDHHHLHIERLAAEITIRGQVLDDARIAQEQAETAASEAKALLVKRSEARHKWQQIQDDLRRAVDILSEAAGEIEADDEILLRYGRGSLAQRSRNEFR.

This is an uncharacterized protein from Rhizobium fredii (Sinorhizobium fredii).